We begin with the raw amino-acid sequence, 136 residues long: Large ribosomal subunit protein bL19 (136 aa).

The protein belongs to the bacterial ribosomal protein bL19 family.

In terms of biological role, this protein is located at the 30S-50S ribosomal subunit interface and may play a role in the structure and function of the aminoacyl-tRNA binding site. The chain is Large ribosomal subunit protein bL19 from Xylella fastidiosa (strain M23).